Here is a 208-residue protein sequence, read N- to C-terminus: Small ribosomal subunit protein uS4A (208 aa).

The S4 RNA-binding domain occupies 98–161; sequence LRLDNVVFRM…RKVLRISEAL (64 aa).

This sequence belongs to the universal ribosomal protein uS4 family. In terms of assembly, part of the 30S ribosomal subunit. Contacts protein S5. The interaction surface between S4 and S5 is involved in control of translational fidelity.

In terms of biological role, one of the primary rRNA binding proteins, it binds directly to 16S rRNA where it nucleates assembly of the body of the 30S subunit. With S5 and S12 plays an important role in translational accuracy. This Myxococcus xanthus (strain DK1622) protein is Small ribosomal subunit protein uS4A.